Here is a 157-residue protein sequence, read N- to C-terminus: Large ribosomal subunit protein uL11 (157 aa).

2 disordered regions span residues 1–28 (MAGT…GPTP) and 138–157 (NNPR…DILK). Over residues 139 to 157 (NPREFKSRMEDGEYDDILK) the composition is skewed to basic and acidic residues.

This sequence belongs to the universal ribosomal protein uL11 family. Part of the ribosomal stalk of the 50S ribosomal subunit. Interacts with L10 and the large rRNA to form the base of the stalk. L10 forms an elongated spine to which L12 dimers bind in a sequential fashion forming a multimeric L10(L12)X complex.

In terms of biological role, forms part of the ribosomal stalk which helps the ribosome interact with GTP-bound translation factors. This chain is Large ribosomal subunit protein uL11, found in Haloquadratum walsbyi (strain DSM 16790 / HBSQ001).